Here is a 235-residue protein sequence, read N- to C-terminus: Glycerol uptake facilitator protein 2 (235 aa).

A run of 6 helical transmembrane segments spans residues F4 to A24, F39 to G59, G62 to N82, V83 to I103, V134 to L154, and M165 to I185. An NPA 1 motif is present at residues N65–A67. Residues N186 to A188 carry the NPA 2 motif. Residues W210–L230 form a helical membrane-spanning segment.

This sequence belongs to the MIP/aquaporin (TC 1.A.8) family.

It is found in the cell membrane. Its function is as follows. Transporter that facilitates the transmembrane diffusion of water, dihydroxyacetone, glycerol and H(2)O(2). Is not permeable to urea and D/L-lactic acid. The sequence is that of Glycerol uptake facilitator protein 2 from Lactiplantibacillus plantarum (strain ATCC BAA-793 / NCIMB 8826 / WCFS1) (Lactobacillus plantarum).